The sequence spans 433 residues: MSISIETLEGLQRRVTITVAADKIEAAYKEQLKGYAKNARVDGFRKGKVPHAIIEQRFGLAARQDVLSDEMQRAFFDAVIAEKINLAGRPTFTPNNYQPGQEFSFTATFEVFPEVELKGLENIEVEKPVVEITEADLDKMIDVLRKQQATWAESQAAAQAEDRVVIDFVGSVDGEEFEGGKATDFTLAMGQDRMIPGFEEGIVGHKAGEQFDIDVTFPEEYHAENLKGKAAKFAITLKKVENIVLPELTEEFVKKFGSAKTVEDLRAEIKKNMQRELKNAVTARVKNQVINGLIAQNEIEVPAAAVAEEVDVLRRQAVQRFGGKPEMAAQLPAELFEADAKRRVQVGLLLSTVIGTNELKVDEKRVEETIAEIASAYEQPAEVVAHYAKNRQLTENIRNVVLEEQAVEVVLAKAKVTEKATSFDEVMAQQAQG.

The 86-residue stretch at 161 to 246 (EDRVVIDFVG…LKKVENIVLP (86 aa)) folds into the PPIase FKBP-type domain.

The protein belongs to the FKBP-type PPIase family. Tig subfamily.

The protein resides in the cytoplasm. The catalysed reaction is [protein]-peptidylproline (omega=180) = [protein]-peptidylproline (omega=0). Involved in protein export. Acts as a chaperone by maintaining the newly synthesized protein in an open conformation. Functions as a peptidyl-prolyl cis-trans isomerase. The polypeptide is Trigger factor (Actinobacillus pleuropneumoniae serotype 5b (strain L20)).